Consider the following 590-residue polypeptide: Pescadillo homolog (590 aa).

Residues 297–318 (AKADAGEEEEVEEEEEVEDDGL) are disordered. Positions 302–318 (GEEEEVEEEEEVEDDGL) are enriched in acidic residues. The region spanning 337–446 (TAGQLFSNFT…KLLPVSEYAP (110 aa)) is the BRCT domain. Residues 452–590 (AHLSPWGDAG…RKLNEKKEKR (139 aa)) are disordered. Residues 471 to 499 (DASDDDEDDEDIEVAPEDYDKDDEEEEAE) are compositionally biased toward acidic residues. Positions 489-589 (YDKDDEEEEA…RRKLNEKKEK (101 aa)) form a coiled coil. 3 stretches are compositionally biased toward basic and acidic residues: residues 500–517 (AEAK…KGTK), 532–547 (DKMT…DKKL), and 567–577 (NDKKSDREAEL).

This sequence belongs to the pescadillo family. In terms of assembly, component of the NOP7 complex, composed of ERB1, NOP7 and YTM1. The complex is held together by ERB1, which interacts with NOP7 via its N-terminal domain and with YTM1 via a high-affinity interaction between the seven-bladed beta-propeller domains of the 2 proteins. The NOP7 complex associates with the 66S pre-ribosome.

It is found in the nucleus. The protein localises to the nucleolus. Its subcellular location is the nucleoplasm. Its function is as follows. Component of the NOP7 complex, which is required for maturation of the 25S and 5.8S ribosomal RNAs and formation of the 60S ribosome. The chain is Pescadillo homolog from Yarrowia lipolytica (strain CLIB 122 / E 150) (Yeast).